We begin with the raw amino-acid sequence, 563 residues long: Probable ganciclovir kinase (563 aa).

Over residues 1 to 16 the composition is skewed to polar residues; that stretch reads MDNGVETPQGQKTQPI. The tract at residues 1 to 33 is disordered; that stretch reads MDNGVETPQGQKTQPINLPPDRKRLRKHDGLGK. ATP contacts are provided by residues 202–210 and Lys219; that span reads LGVGAYGKV. The active-site Proton acceptor is Asp314.

Belongs to the protein kinase superfamily. Tyr protein kinase family. HCMV ganciclovir subfamily.

Phosphorylates the antiviral nucleoside analog ganciclovir. The protein is Probable ganciclovir kinase (U69) of Human herpesvirus 6B (strain Z29) (HHV-6 variant B).